A 266-amino-acid polypeptide reads, in one-letter code: 3-methyl-2-oxobutanoate hydroxymethyltransferase (266 aa).

Mg(2+)-binding residues include Asp-45 and Asp-84. 3-methyl-2-oxobutanoate contacts are provided by residues 45–46 (DS), Asp-84, and Lys-113. Glu-115 is a Mg(2+) binding site. The active-site Proton acceptor is Glu-183.

The protein belongs to the PanB family. As to quaternary structure, homodecamer; pentamer of dimers. Mg(2+) serves as cofactor.

Its subcellular location is the cytoplasm. It catalyses the reaction 3-methyl-2-oxobutanoate + (6R)-5,10-methylene-5,6,7,8-tetrahydrofolate + H2O = 2-dehydropantoate + (6S)-5,6,7,8-tetrahydrofolate. Its pathway is cofactor biosynthesis; (R)-pantothenate biosynthesis; (R)-pantoate from 3-methyl-2-oxobutanoate: step 1/2. In terms of biological role, catalyzes the reversible reaction in which hydroxymethyl group from 5,10-methylenetetrahydrofolate is transferred onto alpha-ketoisovalerate to form ketopantoate. The protein is 3-methyl-2-oxobutanoate hydroxymethyltransferase of Coxiella burnetii (strain CbuK_Q154) (Coxiella burnetii (strain Q154)).